The sequence spans 432 residues: uncharacterized protein (432 aa).

Over residues 1-18 (MAIGDKRKKNRKNKQNKK) the composition is skewed to basic residues. 3 disordered regions span residues 1 to 23 (MAIGDKRKKNRKNKQNKKNKNDN), 37 to 56 (NSNSLVNSNNKNNNNKNGNG), and 122 to 168 (STNS…GSSL). 3 stretches are compositionally biased toward low complexity: residues 37 to 53 (NSNSLVNSNNKNNNNKN), 122 to 147 (STNSNNNNNSTNGNSNSPSIIIQQQQ), and 154 to 168 (ESQSSNNNNNNGSSL). The stretch at 181-226 (LNDQLKIVQLEQKIVNLEKEIQRMRNEQNQIHKQNLNQYHELLKQI) forms a coiled coil. 2 disordered regions span residues 270–290 (VQPVSTPSSSSNSLASKKSNG) and 310–432 (SSKF…STLR). The segment covering 274-288 (STPSSSSNSLASKKS) has biased composition (low complexity). Positions 311 to 324 (SKFAQSNSSPSRVN) are enriched in polar residues. Residues 352-378 (KKSATTTTTSSSSNNATTTTAKGSTST) show a composition bias toward low complexity. Polar residues predominate over residues 383–414 (ITNSNNIKNSVLSPKSITKPNTPSNIIFSPLS).

This is an uncharacterized protein from Dictyostelium discoideum (Social amoeba).